Consider the following 718-residue polypeptide: Calpastatin (718 aa).

Disordered stretches follow at residues 1–189 and 210–238; these read MNPA…MSST and EKKTGVAGPPPDSVTPLGPDDAIDALSSD. Basic residues predominate over residues 20-29; it reads PHSKKRHRRQ. Basic and acidic residues-rich tracts occupy residues 30–61 and 68–104; these read DAKTEPEKSQSTKPPVDHEKKAQEGKPKEHTK and HASDGEGKHGRNEKTASRSKEPVTPAKRTEPETKPQD. Lys-32 participates in a covalent cross-link: Glycyl lysine isopeptide (Lys-Gly) (interchain with G-Cter in SUMO2). Residue Lys-49 is modified to N6-acetyllysine. Residue Ser-86 is modified to Phosphoserine. Residues 114 to 124 show a composition bias toward low complexity; sequence AAGTTAAPGKA. 3 positions are modified to phosphoserine: Ser-133, Ser-222, and Ser-243. Residues 170–222 form an Inhibitory domain 1 repeat; it reads TQEDSTAYTGPEISDPMSSTYIEELGKREVTIPPKYRELLEKKTGVAGPPPDS. Disordered stretches follow at residues 266 to 291 and 320 to 509; these read ESAKVMRAAAPPQEKKRKVEEDAMSD and EAKR…QLPA. At Ser-290 the chain carries Blocked amino end (Ser); in form erythrocyte. Residues 307-359 form an Inhibitory domain 2 repeat; it reads EPELDLSSIKEVAEAKRKEEKVEKCGEDDETVPAEYRLKPATDKDGKPLLPEP. 3 stretches are compositionally biased toward basic and acidic residues: residues 320 to 331, 342 to 377, and 384 to 399; these read EAKRKEEKVEKC, YRLKPATDKDGKPLLPEPAEKPKPRSESELIDELSK, and SNEKQPKPTGKTEESK. Phosphoserine is present on residues Ser-367, Ser-369, and Ser-376. A compositionally biased stretch (low complexity) spans 400-411; that stretch reads AAVPAPVAEAVP. Ser-444 carries the phosphoserine modification. Positions 446–496 are enriched in basic and acidic residues; it reads GRKEADPEEGKPVADKIKEKSKEEEREKLGEKEETIPPDYRLEEAKDKDGK. The Inhibitory domain 3 repeat unit spans residues 450–503; that stretch reads ADPEEGKPVADKIKEKSKEEEREKLGEKEETIPPDYRLEEAKDKDGKPLLPSEP. Ser-520, Ser-531, Ser-579, and Ser-581 each carry phosphoserine. Positions 543-718 are disordered; the sequence is VSEVVSQSPA…KPKANEKNAS (176 aa). A compositionally biased stretch (basic and acidic residues) spans 566–579; the sequence is PSNKELDDALDKLS. An Inhibitory domain 4 repeat occupies 587–640; that stretch reads PDPDENKPMEDKVKERAKKEHKDKLGERDDTIPPEYRHLLDQGEQDKPEKPPTK. 2 stretches are compositionally biased toward basic and acidic residues: residues 587-650 and 706-718; these read PDPD…KPAG and ETSKPKANEKNAS.

Belongs to the protease inhibitor I27 (calpastatin) family.

Functionally, specific inhibition of calpain (calcium-dependent cysteine protease). Plays a key role in postmortem tenderization of meat and have been proposed to be involved in muscle protein degradation in living tissue. The chain is Calpastatin (CAST) from Oryctolagus cuniculus (Rabbit).